The chain runs to 362 residues: Methylthioribose-1-phosphate isomerase (362 aa).

Catalysis depends on Asp-252, which acts as the Proton donor.

It belongs to the eIF-2B alpha/beta/delta subunits family. MtnA subfamily.

It is found in the cytoplasm. The protein resides in the nucleus. It carries out the reaction 5-(methylsulfanyl)-alpha-D-ribose 1-phosphate = 5-(methylsulfanyl)-D-ribulose 1-phosphate. The protein operates within amino-acid biosynthesis; L-methionine biosynthesis via salvage pathway; L-methionine from S-methyl-5-thio-alpha-D-ribose 1-phosphate: step 1/6. Its function is as follows. Catalyzes the interconversion of methylthioribose-1-phosphate (MTR-1-P) into methylthioribulose-1-phosphate (MTRu-1-P). The protein is Methylthioribose-1-phosphate isomerase of Drosophila mojavensis (Fruit fly).